The primary structure comprises 155 residues: SsrA-binding protein (155 aa).

Belongs to the SmpB family.

It is found in the cytoplasm. Required for rescue of stalled ribosomes mediated by trans-translation. Binds to transfer-messenger RNA (tmRNA), required for stable association of tmRNA with ribosomes. tmRNA and SmpB together mimic tRNA shape, replacing the anticodon stem-loop with SmpB. tmRNA is encoded by the ssrA gene; the 2 termini fold to resemble tRNA(Ala) and it encodes a 'tag peptide', a short internal open reading frame. During trans-translation Ala-aminoacylated tmRNA acts like a tRNA, entering the A-site of stalled ribosomes, displacing the stalled mRNA. The ribosome then switches to translate the ORF on the tmRNA; the nascent peptide is terminated with the 'tag peptide' encoded by the tmRNA and targeted for degradation. The ribosome is freed to recommence translation, which seems to be the essential function of trans-translation. The sequence is that of SsrA-binding protein from Lawsonia intracellularis (strain PHE/MN1-00).